Reading from the N-terminus, the 28-residue chain is leu operon leader peptide (28 aa).

Involved in control of the biosynthesis of leucine. The sequence is that of leu operon leader peptide (leuL) from Shigella flexneri.